A 202-amino-acid polypeptide reads, in one-letter code: Imidazoleglycerol-phosphate dehydratase (202 aa).

It belongs to the imidazoleglycerol-phosphate dehydratase family.

The protein localises to the cytoplasm. The enzyme catalyses D-erythro-1-(imidazol-4-yl)glycerol 3-phosphate = 3-(imidazol-4-yl)-2-oxopropyl phosphate + H2O. It functions in the pathway amino-acid biosynthesis; L-histidine biosynthesis; L-histidine from 5-phospho-alpha-D-ribose 1-diphosphate: step 6/9. The chain is Imidazoleglycerol-phosphate dehydratase from Sinorhizobium fredii (strain NBRC 101917 / NGR234).